A 351-amino-acid chain; its full sequence is DNA polymerase IV (351 aa).

In terms of domain architecture, UmuC spans 4 to 185 (IIHVDMDCFF…LPLAKIPGVG (182 aa)). Aspartate 8 and aspartate 103 together coordinate Mg(2+). The active site involves glutamate 104.

Belongs to the DNA polymerase type-Y family. As to quaternary structure, monomer. The cofactor is Mg(2+).

Its subcellular location is the cytoplasm. The catalysed reaction is DNA(n) + a 2'-deoxyribonucleoside 5'-triphosphate = DNA(n+1) + diphosphate. In terms of biological role, poorly processive, error-prone DNA polymerase involved in untargeted mutagenesis. Copies undamaged DNA at stalled replication forks, which arise in vivo from mismatched or misaligned primer ends. These misaligned primers can be extended by PolIV. Exhibits no 3'-5' exonuclease (proofreading) activity. May be involved in translesional synthesis, in conjunction with the beta clamp from PolIII. The chain is DNA polymerase IV from Escherichia coli O9:H4 (strain HS).